A 220-amino-acid polypeptide reads, in one-letter code: Large ribosomal subunit protein uL1 (220 aa).

The protein belongs to the universal ribosomal protein uL1 family. As to quaternary structure, part of the 50S ribosomal subunit.

Functionally, binds directly to 23S rRNA. The L1 stalk is quite mobile in the ribosome, and is involved in E site tRNA release. Its function is as follows. Protein L1 is also a translational repressor protein, it controls the translation of the L11 operon by binding to its mRNA. The polypeptide is Large ribosomal subunit protein uL1 (Ehrlichia ruminantium (strain Gardel)).